Reading from the N-terminus, the 162-residue chain is Shikimate kinase (162 aa).

11–16 (GSGKSS) is a binding site for ATP. Position 15 (serine 15) interacts with Mg(2+). Substrate-binding residues include aspartate 33, arginine 57, and glycine 80. Residues 109–123 (NQKEREKRPLLNNLT) are LID domain. Arginine 116 provides a ligand contact to ATP. Residue arginine 132 participates in substrate binding.

Belongs to the shikimate kinase family. Monomer. Mg(2+) is required as a cofactor.

The protein localises to the cytoplasm. The enzyme catalyses shikimate + ATP = 3-phosphoshikimate + ADP + H(+). It functions in the pathway metabolic intermediate biosynthesis; chorismate biosynthesis; chorismate from D-erythrose 4-phosphate and phosphoenolpyruvate: step 5/7. Its function is as follows. Catalyzes the specific phosphorylation of the 3-hydroxyl group of shikimic acid using ATP as a cosubstrate. The chain is Shikimate kinase (aroK) from Helicobacter pylori (strain ATCC 700392 / 26695) (Campylobacter pylori).